We begin with the raw amino-acid sequence, 93 residues long: Putative regulatory protein Clos_1422 (93 aa).

It belongs to the RemA family.

In Alkaliphilus oremlandii (strain OhILAs) (Clostridium oremlandii (strain OhILAs)), this protein is Putative regulatory protein Clos_1422.